The chain runs to 312 residues: Protoheme IX farnesyltransferase (312 aa).

9 helical membrane-spanning segments follow: residues 29 to 49, 50 to 70, 90 to 110, 117 to 137, 150 to 170, 177 to 197, 223 to 243, 248 to 268, and 292 to 312; these read VMSL…GHMN, PVLA…SGAL, IPAG…LSAF, LMVN…YAVV, IVIG…AATG, VVLF…LSLF, ALFY…LGFA, GAIS…MWVA, and LFAV…FGGF.

The protein belongs to the UbiA prenyltransferase family. Protoheme IX farnesyltransferase subfamily.

The protein resides in the cell inner membrane. The enzyme catalyses heme b + (2E,6E)-farnesyl diphosphate + H2O = Fe(II)-heme o + diphosphate. It participates in porphyrin-containing compound metabolism; heme O biosynthesis; heme O from protoheme: step 1/1. Its function is as follows. Converts heme B (protoheme IX) to heme O by substitution of the vinyl group on carbon 2 of heme B porphyrin ring with a hydroxyethyl farnesyl side group. This is Protoheme IX farnesyltransferase from Brucella anthropi (strain ATCC 49188 / DSM 6882 / CCUG 24695 / JCM 21032 / LMG 3331 / NBRC 15819 / NCTC 12168 / Alc 37) (Ochrobactrum anthropi).